An 89-amino-acid polypeptide reads, in one-letter code: Small ribosomal subunit protein uS17 (89 aa).

Belongs to the universal ribosomal protein uS17 family. As to quaternary structure, part of the 30S ribosomal subunit.

Functionally, one of the primary rRNA binding proteins, it binds specifically to the 5'-end of 16S ribosomal RNA. This is Small ribosomal subunit protein uS17 from Ralstonia nicotianae (strain ATCC BAA-1114 / GMI1000) (Ralstonia solanacearum).